We begin with the raw amino-acid sequence, 189 residues long: Frataxin-like protein, mitochondrial (189 aa).

The transit peptide at 1–50 directs the protein to the mitochondrion; that stretch reads MNCARLHQRIPLRAMALTTTSYPALAPSHSFANASTSVMTASAMAVAHRA.

It belongs to the frataxin family. As to quaternary structure, interacts with IscU; the interaction is direct.

The protein localises to the mitochondrion. The enzyme catalyses 4 Fe(2+) + O2 + 4 H(+) = 4 Fe(3+) + 2 H2O. In terms of biological role, iron-binding protein which binds 2 iron atoms per monomer. Probably, acts as an iron carrier for the biosynthesis of Fe-S clusters. Stimulates the cysteine desulphurase activity of IscS in the presence of IscU. The protein is Frataxin-like protein, mitochondrial of Leishmania donovani.